The sequence spans 271 residues: MLTVDNLEKTYDSGDRALKGVSFEVSGNEIVAIIGPSGAGKSTLVRSINRLTEPTGGRISLDDTEVTGLEKSALRDVRRDMGMIFQEFNLVERLTVMENILSGRLGYLSTWNAFRRNFPPEDIRRAREILSRVNLEGVENNRADELSGGQRQRVGIARAVIQRPKILLADEPTSALDPDTSREVMSLLTDIAHEDDIPIIINIHEVDLAVDYADRIIGLSDGEIVFNGPPDDLDQAARDEIYRGGESIADREEPSAGNSTDADDVIAERGD.

An ABC transporter domain is found at 2 to 246 (LTVDNLEKTY…ARDEIYRGGE (245 aa)). 35–42 (GPSGAGKS) provides a ligand contact to ATP. Basic and acidic residues predominate over residues 243 to 254 (RGGESIADREEP). The interval 243-271 (RGGESIADREEPSAGNSTDADDVIAERGD) is disordered.

This sequence belongs to the ABC transporter superfamily. Phosphonates importer (TC 3.A.1.9.1) family. The complex is composed of two ATP-binding proteins (PhnC), two transmembrane proteins (PhnE) and a solute-binding protein (PhnD).

The protein resides in the cell membrane. The catalysed reaction is phosphonate(out) + ATP + H2O = phosphonate(in) + ADP + phosphate + H(+). Its function is as follows. Part of the ABC transporter complex PhnCDE involved in phosphonates import. Responsible for energy coupling to the transport system. This is Phosphonates import ATP-binding protein PhnC 2 from Haloarcula marismortui (strain ATCC 43049 / DSM 3752 / JCM 8966 / VKM B-1809) (Halobacterium marismortui).